A 179-amino-acid polypeptide reads, in one-letter code: Auxin-responsive protein IAA15 (179 aa).

An EAR-like (transcriptional repression) motif is present at residues L21 to L25. The PB1 domain occupies R86 to T173.

The protein belongs to the Aux/IAA family. As to quaternary structure, homodimers and heterodimers.

The protein localises to the nucleus. Aux/IAA proteins are short-lived transcriptional factors that function as repressors of early auxin response genes at low auxin concentrations. Repression is thought to result from the interaction with auxin response factors (ARFs), proteins that bind to the auxin-responsive promoter element (AuxRE). Formation of heterodimers with ARF proteins may alter their ability to modulate early auxin response genes expression. This chain is Auxin-responsive protein IAA15 (IAA15), found in Arabidopsis thaliana (Mouse-ear cress).